Consider the following 423-residue polypeptide: tRNA(Met) cytidine acetate ligase (423 aa).

ATP-binding positions include Val7–His20, Gly102, Asn165, and Arg190.

It belongs to the TmcAL family.

It localises to the cytoplasm. It catalyses the reaction cytidine(34) in elongator tRNA(Met) + acetate + ATP = N(4)-acetylcytidine(34) in elongator tRNA(Met) + AMP + diphosphate. Its function is as follows. Catalyzes the formation of N(4)-acetylcytidine (ac(4)C) at the wobble position of elongator tRNA(Met), using acetate and ATP as substrates. First activates an acetate ion to form acetyladenylate (Ac-AMP) and then transfers the acetyl group to tRNA to form ac(4)C34. The polypeptide is tRNA(Met) cytidine acetate ligase (Thermosipho africanus (strain TCF52B)).